Here is a 784-residue protein sequence, read N- to C-terminus: Ent-kaurene synthase 1, chloroplastic (784 aa).

The N-terminal 28 residues, 1–28, are a transit peptide targeting the chloroplast; sequence MNLSLCIASPLLTKSSRPTALSAIHTAS. Asp528, Asp532, Asn672, and Glu680 together coordinate Mg(2+). The DDXXD motif signature appears at 528–532; that stretch reads DDFFD.

This sequence belongs to the terpene synthase family. The cofactor is Mg(2+). In terms of tissue distribution, accumulates in leaves.

The protein localises to the plastid. It is found in the chloroplast. The enzyme catalyses ent-copalyl diphosphate = ent-kaur-16-ene + diphosphate. The protein operates within secondary metabolite biosynthesis; terpenoid biosynthesis. It functions in the pathway plant hormone biosynthesis; gibberellin biosynthesis. Functionally, involved in the biosynthesis of ent-kaurene diterpenoids natural products such as oridonin, miltiradiene, eriocalyxin B and nezukol, known to exhibit antitumor, anti-inflammatory and antibacterial activities, and in the production of gibberellins phytohormones. Catalyzes the conversion of ent-copalyl diphosphate (ent-CPP) to ent-kaurene. The polypeptide is Ent-kaurene synthase 1, chloroplastic (Stevia rebaudiana (Stevia)).